Here is a 362-residue protein sequence, read N- to C-terminus: Heat-inducible transcription repressor HrcA (362 aa).

The protein belongs to the HrcA family.

Negative regulator of class I heat shock genes (grpE-dnaK-dnaJ and groELS operons). Prevents heat-shock induction of these operons. The chain is Heat-inducible transcription repressor HrcA from Nitrobacter winogradskyi (strain ATCC 25391 / DSM 10237 / CIP 104748 / NCIMB 11846 / Nb-255).